Here is a 1763-residue protein sequence, read N- to C-terminus: Collagen alpha-2(IV) chain (1763 aa).

A signal peptide spans 1–26; the sequence is MSSRLRIPLWLLLPTTALVYFVTTVS. A 7S domain region spans residues 27 to 42; the sequence is TQITCRDCTNRGCFCV. The triple-helical region stretch occupies residues 43–1529; it reads GEKGSMGIPG…SGPPGPPGPS (1487 aa). 2 disordered regions span residues 51 to 529 and 550 to 1529; these read PGPQ…PGPK and AGYA…PGPS. Residues 72 to 81 are compositionally biased toward low complexity; that stretch reads PGPKGQKGSQ. N-linked (GlcNAc...) asparagine glycosylation occurs at asparagine 126. Positions 135–152 are enriched in pro residues; sequence PGLPGPPGMPGFPGPPGV. The span at 190 to 199 shows a compositional bias: basic and acidic residues; sequence FPGEKGDRGD. Over residues 206–217 the composition is skewed to pro residues; it reads RGPPGEAGPPGN. Over residues 225-235 the composition is skewed to low complexity; it reads PKGDPGEQGPR. A glycan (O-linked (Xyl...) (glycosaminoglycan) serine) is linked at alanine 249. Over residues 326 to 335 the composition is skewed to low complexity; sequence DGLPGVPGLP. Positions 400 to 409 are enriched in gly residues; it reads GLPGGPGLPG. 2 stretches are compositionally biased toward low complexity: residues 410 to 419 and 428 to 453; these read LPGLEGLPGP and IPGAPGVQGPPGLAGPPGAKGEPGPR. Positions 466-481 are enriched in basic and acidic residues; the sequence is KDGRPGLDGLPGRKGE. Over residues 564–582 the composition is skewed to low complexity; sequence LPGIPGATGAPGDDGLPGA. Pro residues predominate over residues 583 to 592; sequence PGRPGPPGPP. 2 stretches are compositionally biased toward low complexity: residues 699 to 714 and 731 to 783; these read DAGLPGLPGLPGAVGP and KDGL…PGIP. Pro residues predominate over residues 810-832; the sequence is PGLPGPKGEPGPSTTGPPGPPGF. 10 stretches are compositionally biased toward low complexity: residues 865-895, 946-977, 1040-1051, 1077-1086, 1108-1146, 1210-1231, 1280-1296, 1367-1386, 1462-1480, and 1499-1510; these read EIGLPGLAGAPGFPGAKGEPGLPGLPGKEGP, FPGQKGQPGFPGVAGAKGEAGLPGLPGAPGQK, PGLPGQPGLRGP, LMGEKGLPGL, PGLKGEAGLPGAPGLPGQDGLPGLPGQKGESGFPGQPGL, PGFPGLKGEPGLPGLEGQPGPR, LPGLPGKDGLPGLPGLK, PAGLPGLPGLKGEPGLPGFP, LPGLDGLPGPSGPPGFAGA, and PGLPGFPGIEGI. The span at 1511–1528 shows a compositional bias: pro residues; it reads PGPPGLPGPSGPPGPPGP. Residues 1533 to 1756 form the Collagen IV NC1 domain; it reads GFLLVKHSQT…SRCQVCIRSP (224 aa). Intrachain disulfides connect cysteine 1548/cysteine 1637, cysteine 1581/cysteine 1634, cysteine 1593/cysteine 1599, cysteine 1656/cysteine 1752, cysteine 1690/cysteine 1749, and cysteine 1702/cysteine 1709.

It belongs to the type IV collagen family. Trimers of two alpha 1(IV) and one alpha 2(IV) chain. Type IV collagen forms a mesh-like network linked through intermolecular interactions between 7S domains and between NC1 domains. Post-translationally, prolines at the third position of the tripeptide repeating unit (G-X-Y) are hydroxylated in some or all of the chains. In terms of processing, type IV collagens contain numerous cysteine residues which are involved in inter- and intramolecular disulfide bonding. 12 of these, located in the NC1 domain, are conserved in all known type IV collagens. The trimeric structure of the NC1 domains is stabilized by covalent bonds between Lys and Met residues.

It localises to the secreted. The protein localises to the extracellular space. It is found in the extracellular matrix. Its subcellular location is the basement membrane. Collagen type IV is specific for basement membranes. The polypeptide is Collagen alpha-2(IV) chain (Ascaris suum (Pig roundworm)).